The following is a 1071-amino-acid chain: Ubiquitin carboxyl-terminal hydrolase 7 (1071 aa).

Residues K467–P532 are disordered. Residues Q471–Q480 show a composition bias toward low complexity. Residues P481–K495 show a composition bias toward polar residues. 2 stretches are compositionally biased toward pro residues: residues P497–L507 and P516–P532. In terms of domain architecture, USP spans T609 to V1069. C618 (nucleophile) is an active-site residue. Residues R913–K942 are disordered. The span at K920–G932 shows a compositional bias: polar residues. H1014 (proton acceptor) is an active-site residue.

It belongs to the peptidase C19 family.

The protein localises to the cytoplasm. It catalyses the reaction Thiol-dependent hydrolysis of ester, thioester, amide, peptide and isopeptide bonds formed by the C-terminal Gly of ubiquitin (a 76-residue protein attached to proteins as an intracellular targeting signal).. Functionally, involved in the sorting of ubiquitinated cargo proteins at the multivesicular body (MVB). The sequence is that of Ubiquitin carboxyl-terminal hydrolase 7 (UBP7) from Saccharomyces cerevisiae (strain ATCC 204508 / S288c) (Baker's yeast).